The following is a 329-amino-acid chain: Sex comb on midleg-like protein 1 (329 aa).

A phosphoserine mark is found at Ser-138 and Ser-238. In terms of domain architecture, SAM spans 258-325; sequence WSVEAVVLFL…YYIDRLKQGK (68 aa).

The protein belongs to the SCM family.

It is found in the nucleus. Putative Polycomb group (PcG) protein. PcG proteins act by forming multiprotein complexes, which are required to maintain the transcriptionally repressive state of homeotic genes throughout development. May be involved in spermatogenesis during sexual maturation. This Nomascus leucogenys (Northern white-cheeked gibbon) protein is Sex comb on midleg-like protein 1 (SCML1).